The primary structure comprises 503 residues: Angiopoietin-4 (503 aa).

The first 24 residues, 1 to 24 (MLSQLAMLQGSLLLVVATMSVAQQ), serve as a signal peptide directing secretion. The stretch at 84–238 (TQQVKQLEQA…RQSAALTNIE (155 aa)) forms a coiled coil. Residues Asn-96, Asn-126, Asn-140, Asn-158, Asn-247, Asn-274, Asn-311, Asn-337, and Asn-427 are each glycosylated (N-linked (GlcNAc...) asparagine). Residues 282 to 502 (MAGEQVFQDC…ASRMMIRPLD (221 aa)) form the Fibrinogen C-terminal domain. A disulfide bond links Cys-291 and Cys-320. Cys-444 and Cys-457 form a disulfide bridge.

Homodimer; disulfide-linked. Interacts with TEK/TIE2. Highly expressed in the lung with much lower levels found in other tissues.

It is found in the secreted. Binds to TEK/TIE2, modulating ANGPT1 signaling. Can induce tyrosine phosphorylation of TEK/TIE2. Promotes endothelial cell survival, migration and angiogenesis. In Homo sapiens (Human), this protein is Angiopoietin-4 (ANGPT4).